We begin with the raw amino-acid sequence, 165 residues long: 16S rRNA aminocarboxypropyltransferase (165 aa).

S-adenosyl-L-methionine contacts are provided by threonine 17, leucine 62, leucine 83, and threonine 102.

Belongs to the TDD superfamily. TSR3 family.

The protein localises to the cytoplasm. The catalysed reaction is an N(1)-methylpseudouridine in rRNA + S-adenosyl-L-methionine = N(1)-methyl-N(3)-[(3S)-3-amino-3-carboxypropyl]pseudouridine in rRNA + S-methyl-5'-thioadenosine + H(+). Its function is as follows. Aminocarboxypropyltransferase that catalyzes the aminocarboxypropyl transfer on pseudouridine corresponding to position 914 in M.jannaschii 16S rRNA. It constitutes the last step in biosynthesis of the hypermodified N1-methyl-N3-(3-amino-3-carboxypropyl) pseudouridine (m1acp3-Psi). This Halobacterium salinarum (strain ATCC 700922 / JCM 11081 / NRC-1) (Halobacterium halobium) protein is 16S rRNA aminocarboxypropyltransferase.